The chain runs to 235 residues: Peroxisomal membrane protein 11C (235 aa).

Residues 1–91 lie on the Cytoplasmic side of the membrane; sequence MSTLETTRAE…LPLVLLGKSK (91 aa). A helical transmembrane segment spans residues 92–108; sequence NALLSTFLFLDQIVWLG. Residues 109 to 206 lie on the Lumenal side of the membrane; the sequence is RTGIYKDKER…LLQLAPKKVT (98 aa). The helical transmembrane segment at 207–226 threads the bilayer; the sequence is PRVTGAFGFASSLISCYQLL. Residues 227–235 lie on the Cytoplasmic side of the membrane; the sequence is PSHPKSKMV.

It belongs to the peroxin-11 family. As to quaternary structure, homooligomer. Interacts with ARC5 and FIS1B on peroxisomes. As to expression, expressed in roots and developing siliques.

It localises to the peroxisome membrane. Its function is as follows. Involved in peroxisomal proliferation. Promotes peroxisomal duplication, aggregation or elongation without fission. The protein is Peroxisomal membrane protein 11C (PEX11C) of Arabidopsis thaliana (Mouse-ear cress).